A 431-amino-acid polypeptide reads, in one-letter code: MEPQEEFITTEEVEQEIVPTVEVEQDVPVDIEGENDDDDEMMNDDEEALEVDMSNNSLTYFDKHTDSVFAIGHHPNLPLVCTGGGDNLAHLWTSHSQPPKFAGTLTGYGESVISCSFTSEGGFLVTADMSGKVLVHMGQKGGAQWKLASQMQEVEEIVWLKTHPTIARTFAFGATDGSVWCYQINEQDGSLEQLMSGFVHQQDCSMGEFINTDKGENTLELVTCSLDSTIVAWNCFTGQQLFKITQAEIKGLEAPWISLSLAPETLTKGNSGVVACGSNNGLLAVINCNNGGAILHLSTVIELKPEQDELDASIESISWSSKFSLMAIGLVCGEILLYDTSAWRVRHKFVLEDSVTKLMFDNDDLFASCINGKVYQFNARTGQEKFVCVGHNMGVLDFILLHPVANTGTEQKRKVITAGDEGVSLVFEVPN.

WD repeat units lie at residues lysine 63 to alanine 102, glycine 107 to lysine 146, serine 149 to glutamate 192, valine 199 to lysine 243, glutamate 309 to lysine 348, and valine 350 to valine 387.

Interacts strongly with QSR1. Part of an oligomeric protein complex that is loosely associated with ribosomes.

Functionally, may be involved in the late step of 60S ribosomal subunit assembly or modification in the cytoplasm. The sequence is that of Ribosome assembly protein SQT1 (SQT1) from Saccharomyces cerevisiae (strain ATCC 204508 / S288c) (Baker's yeast).